We begin with the raw amino-acid sequence, 472 residues long: Arginine biosynthesis bifunctional protein ArgJ, mitochondrial (472 aa).

Positions 200, 229, 240, 327, 467, and 472 each coordinate substrate. Catalysis depends on threonine 240, which acts as the Nucleophile.

The protein belongs to the ArgJ family. Heterodimer of an alpha and a beta chain. The alpha and beta chains are autoproteolytically processed from a single precursor protein within the mitochondrion.

The protein resides in the mitochondrion matrix. It catalyses the reaction N(2)-acetyl-L-ornithine + L-glutamate = N-acetyl-L-glutamate + L-ornithine. It carries out the reaction L-glutamate + acetyl-CoA = N-acetyl-L-glutamate + CoA + H(+). The protein operates within amino-acid biosynthesis; L-arginine biosynthesis; L-ornithine and N-acetyl-L-glutamate from L-glutamate and N(2)-acetyl-L-ornithine (cyclic): step 1/1. It participates in amino-acid biosynthesis; L-arginine biosynthesis; N(2)-acetyl-L-ornithine from L-glutamate: step 1/4. Catalyzes two activities which are involved in the cyclic version of arginine biosynthesis: the synthesis of acetylglutamate from glutamate and acetyl-CoA, and of ornithine by transacetylation between acetylornithine and glutamate. The sequence is that of Arginine biosynthesis bifunctional protein ArgJ, mitochondrial from Talaromyces marneffei (strain ATCC 18224 / CBS 334.59 / QM 7333) (Penicillium marneffei).